The primary structure comprises 89 residues: Gamma-bungarotoxin (89 aa).

A signal peptide spans 1–21 (MKTLLLTLVVVTIVCLDLGYT). 5 disulfide bridges follow: cysteine 24–cysteine 45, cysteine 27–cysteine 32, cysteine 38–cysteine 66, cysteine 70–cysteine 81, and cysteine 82–cysteine 87. The Cell attachment site motif lies at 54 to 56 (RGD).

Belongs to the three-finger toxin family. Ancestral subfamily. Orphan group V sub-subfamily. Expressed by the venom gland.

It localises to the secreted. Functionally, exhibits M2 muscarinic acetylcholine receptor (CHRM2)-blocking activity, but has a weak binding activity toward nicotinic AChR. Moreover, it inhibits collagen-induced platelet aggregation. This chain is Gamma-bungarotoxin, found in Bungarus multicinctus (Many-banded krait).